A 355-amino-acid chain; its full sequence is MLDRLNFIENKYEELSIKISDPTVMQDQKEWQKLCKEHSDMETIVTTYKEYKEVLQSIEDNKEMLKEDIEQELRDMVQEDIKELEQRVQELEQELKMLLVPKDPNDEKNVFIEIRAGAGGDEAALFAANLFRMYTRYAERHNWKTEAVSVNETDIGGFKEIVFMVRGKGAYSRLKYESGVHRVQRVPDTESSGRIHTSTATVAVLPEVEDVDVEINQNDLRVDVYRASGHGGQCVNTTDSAVRITHLPSGLVVTCQDEKSQLKNKEKAMKVLKSRLYDMLESERSASIAEDRKSQVGTGDRSERIRTYNYPQGRVTDHRIGLTLYKLESFLDGDIEEMIDGLITVEQSERMKDIS.

An N5-methylglutamine modification is found at Q233.

Belongs to the prokaryotic/mitochondrial release factor family. Methylated by PrmC. Methylation increases the termination efficiency of RF1.

The protein localises to the cytoplasm. Peptide chain release factor 1 directs the termination of translation in response to the peptide chain termination codons UAG and UAA. In Clostridium tetani (strain Massachusetts / E88), this protein is Peptide chain release factor 1.